A 68-amino-acid chain; its full sequence is Beta-defensin 1 (68 aa).

An N-terminal signal peptide occupies residues methionine 1–glycine 21. Residues glycine 22–serine 32 constitute a propeptide that is removed on maturation. Cystine bridges form between cysteine 37–cysteine 66, cysteine 44–cysteine 59, and cysteine 49–cysteine 67.

Belongs to the beta-defensin family. In terms of assembly, monomer. Homodimer.

The protein localises to the secreted. It localises to the membrane. Has bactericidal activity. May act as a ligand for C-C chemokine receptor CCR6. Positively regulates the sperm motility and bactericidal activity in a CCR6-dependent manner. Binds to CCR6 and triggers Ca2+ mobilization in the sperm which is important for its motility. This is Beta-defensin 1 (DEFB1) from Gorilla gorilla gorilla (Western lowland gorilla).